We begin with the raw amino-acid sequence, 744 residues long: Phosphoribosylformylglycinamidine synthase subunit PurL (744 aa).

His-45 is an active-site residue. Residues Tyr-48 and Lys-87 each coordinate ATP. Glu-89 contacts Mg(2+). Substrate contacts are provided by residues 90–93 and Arg-112; that span reads SHNH. His-91 acts as the Proton acceptor in catalysis. Asp-113 is a binding site for Mg(2+). Residue Gln-236 coordinates substrate. A Mg(2+)-binding site is contributed by Asp-264. 308–310 is a substrate binding site; it reads ESQ. Residues Asn-492 and Gly-529 each coordinate ATP. Asn-530 is a binding site for Mg(2+). Ser-532 provides a ligand contact to substrate.

Belongs to the FGAMS family. In terms of assembly, monomer. Part of the FGAM synthase complex composed of 1 PurL, 1 PurQ and 2 PurS subunits.

It is found in the cytoplasm. It carries out the reaction N(2)-formyl-N(1)-(5-phospho-beta-D-ribosyl)glycinamide + L-glutamine + ATP + H2O = 2-formamido-N(1)-(5-O-phospho-beta-D-ribosyl)acetamidine + L-glutamate + ADP + phosphate + H(+). It functions in the pathway purine metabolism; IMP biosynthesis via de novo pathway; 5-amino-1-(5-phospho-D-ribosyl)imidazole from N(2)-formyl-N(1)-(5-phospho-D-ribosyl)glycinamide: step 1/2. Part of the phosphoribosylformylglycinamidine synthase complex involved in the purines biosynthetic pathway. Catalyzes the ATP-dependent conversion of formylglycinamide ribonucleotide (FGAR) and glutamine to yield formylglycinamidine ribonucleotide (FGAM) and glutamate. The FGAM synthase complex is composed of three subunits. PurQ produces an ammonia molecule by converting glutamine to glutamate. PurL transfers the ammonia molecule to FGAR to form FGAM in an ATP-dependent manner. PurS interacts with PurQ and PurL and is thought to assist in the transfer of the ammonia molecule from PurQ to PurL. The polypeptide is Phosphoribosylformylglycinamidine synthase subunit PurL (Erythrobacter litoralis (strain HTCC2594)).